A 704-amino-acid chain; its full sequence is Mannan-binding lectin serine protease 1 (704 aa).

Positions 1–24 are cleaved as a signal peptide; it reads MRFLSFWRLLLYHALCLALPEVSA. Positions 25 to 143 constitute a CUB 1 domain; that stretch reads HTVELNEMFG…TGFDAHYMAV (119 aa). The interval 25–189 is homodimerization; it reads HTVELNEMFG…HTDNRTCRVE (165 aa). Positions 25–189 are interaction with MBL2; sequence HTVELNEMFG…HTDNRTCRVE (165 aa). Residues 25–283 are interaction with FCN2; it reads HTVELNEMFG…STQTHSVQIL (259 aa). Residues 25–305 form an interaction with MBL1 region; the sequence is HTVELNEMFG…RLSYRAAGNE (281 aa). A glycan (N-linked (GlcNAc...) asparagine) is linked at Asn-54. Residues Glu-73, Asp-81, Asp-126, Ser-128, Asp-144, Val-145, and Glu-147 each coordinate Ca(2+). Residues Cys-78 and Cys-96 are joined by a disulfide bond. The EGF-like; calcium-binding domain maps to 144-187; that stretch reads DVDECKEREDEELSCDHYCHNYIGGYYCSCRFGYILHTDNRTCR. Intrachain disulfides connect Cys-148-Cys-162, Cys-158-Cys-171, Cys-173-Cys-186, and Cys-190-Cys-217. Asn-164, Tyr-165, and Gly-168 together coordinate Ca(2+). Asn-164 carries the post-translational modification (3R)-3-hydroxyasparagine. An N-linked (GlcNAc...) asparagine glycan is attached at Asn-183. Residues 190–302 form the CUB 2 domain; sequence CSGNLFTQRT…RGWRLSYRAA (113 aa). Ca(2+) is bound by residues Glu-240, Asp-250, Asp-287, and Ser-289. Cysteines 247 and 265 form a disulfide. 2 Sushi domains span residues 304–369 and 370–439; these read NECP…TCKI and VDCG…TCLP. Disulfide bonds link Cys-306–Cys-354, Cys-334–Cys-367, Cys-372–Cys-419, Cys-402–Cys-437, Cys-441–Cys-577, Cys-480–Cys-496, Cys-619–Cys-636, and Cys-647–Cys-677. 2 N-linked (GlcNAc...) asparagine glycosylation sites follow: Asn-390 and Asn-412. In terms of domain architecture, Peptidase S1 spans 454–701; sequence IFNGRPAQKG…NKDWIQRITG (248 aa). Active-site charge relay system residues include His-495 and Asp-557. Ser-651 serves as the catalytic Charge relay system.

Belongs to the peptidase S1 family. Homodimer. Interacts with the oligomeric lectins MBL2, FCN2 and FCN3; triggers the lectin pathway of complement through activation of C3. Interacts with SERPING1. Interacts with COLEC11; probably triggers the lectin pathway of complement. In terms of processing, the iron and 2-oxoglutarate dependent 3-hydroxylation of aspartate and asparagine is (R) stereospecific within EGF domains. N-glycosylated. Some N-linked glycan are of the complex-type. Post-translationally, autoproteolytic processing of the proenzyme produces the active enzyme composed on the heavy and the light chain held together by a disulfide bond. Isoform 1 but not isoform 2 is activated through autoproteolytic processing. As to expression, protein of the plasma which is primarily expressed by liver.

The protein localises to the secreted. Inhibited by SERPING1 and A2M. In terms of biological role, functions in the lectin pathway of complement, which performs a key role in innate immunity by recognizing pathogens through patterns of sugar moieties and neutralizing them. The lectin pathway is triggered upon binding of mannan-binding lectin (MBL) and ficolins to sugar moieties which leads to activation of the associated proteases MASP1 and MASP2. Functions as an endopeptidase and may activate MASP2 or C2 or directly activate C3 the key component of complement reaction. Isoform 2 may have an inhibitory effect on the activation of the lectin pathway of complement or may cleave IGFBP5. Also plays a role in development. The polypeptide is Mannan-binding lectin serine protease 1 (Masp1) (Mus musculus (Mouse)).